A 712-amino-acid polypeptide reads, in one-letter code: MVRPNNNQLPENLPQLQNLIKRDPESYSDEFHIQYQHFLSLLEVFALNPSEENKSLDDIVMFVAQVAQCYPAVCEEFPKRLSDLLKNYATVLDPAMRNCFVKALILLRNKNLVPALDILELFFQLLRCPDKNLRTFLQTHIVTDIKNMNAKHKDMKLNSSLQAFMYSMLKDANPKAAKMSADIMIELYKKNIWNDSKTVNVIATVGCFSKVTKVLVTSLKFFLGHDEEDEEEDTDSENEVDLKGALMANRVNKKTKKRTKQLAQIKKQAVKAQKKKKNAPAFNFSGIHLVHNPQGMAEGLFKQLQATNERFEVKLMHLDVISRLIGIHDLFLFGFYPYITRFLQPHQRQVTRVLQFAAQASHELVPGDIIEPILKTIANNFITERNSSDVMAIGLNATREICMRCPLAMGEDLLQDLAMYKTYKEKSVMMAARSLITLYREQLPALLHKKDRGRQTEAQAERKVRAYGEREVHDTVLGAEALLKDSKTIDIESEDDTDSNDGEWVNVAHSDGEGGGADDDEEDEDEDEDDDDEDEDEENSNDEENEDEDNSDEGVESGEESAKAKKEKKDMRILNQKEAAQELALTRIFTDEDFKRINAANLKKTVTSARKRPLEQDRAEFVKLNSIEMIYKKRKHDKESRLETVQAGRQDRERFGWKDGRVNEHCSKTNREKRKTKNFGMLRHKARSKVKKSFKDKQQALRKHLLHQKKMK.

Threonine 234 carries the post-translational modification Phosphothreonine. The residue at position 236 (serine 236) is a Phosphoserine. 2 disordered regions span residues 488–573 and 662–712; these read TIDI…DMRI and VNEH…KKMK. 2 stretches are compositionally biased toward acidic residues: residues 491-501 and 516-559; these read IESEDDTDSND and GADD…ESGE. Basic and acidic residues predominate over residues 560–572; the sequence is ESAKAKKEKKDMR. Composition is skewed to basic residues over residues 671–692 and 700–712; these read REKR…KVKK and ALRK…KKMK.

The protein belongs to the SDA1 family.

The protein resides in the nucleus. It is found in the nucleolus. In terms of biological role, required for 60S pre-ribosomal subunits export to the cytoplasm. This is Protein SDA1 homolog (Mys45A) from Drosophila melanogaster (Fruit fly).